Reading from the N-terminus, the 142-residue chain is MFLIDVNVLLAAHRGDHPNHRTVRPWFDRLLAADDPFTVPNLVWASFLRLTTNRRIFEIPSPRADAFAFVEAVNAQPHHLPTSPGPRHLVLLRKLCDEADASGDLIPDAVLGAIAVEHHCAVVSLDRDFARFASVRHIRPPI.

The 137-residue stretch at 3 to 139 (LIDVNVLLAA…ARFASVRHIR (137 aa)) folds into the PINc domain. Mg(2+) is bound by residues D5 and D108.

The protein belongs to the PINc/VapC protein family. Mg(2+) serves as cofactor.

Its function is as follows. Toxic component of a type II toxin-antitoxin (TA) system. An RNase. Upon expression in M.smegmatis inhibits colony formation. Its toxic effect is neutralized by coexpression with cognate antitoxin VapB25. This Mycobacterium tuberculosis (strain ATCC 25618 / H37Rv) protein is Ribonuclease VapC25.